A 213-amino-acid chain; its full sequence is ATP phosphoribosyltransferase (213 aa).

This sequence belongs to the ATP phosphoribosyltransferase family. Short subfamily. Heteromultimer composed of HisG and HisZ subunits.

It localises to the cytoplasm. It carries out the reaction 1-(5-phospho-beta-D-ribosyl)-ATP + diphosphate = 5-phospho-alpha-D-ribose 1-diphosphate + ATP. It participates in amino-acid biosynthesis; L-histidine biosynthesis; L-histidine from 5-phospho-alpha-D-ribose 1-diphosphate: step 1/9. Its function is as follows. Catalyzes the condensation of ATP and 5-phosphoribose 1-diphosphate to form N'-(5'-phosphoribosyl)-ATP (PR-ATP). Has a crucial role in the pathway because the rate of histidine biosynthesis seems to be controlled primarily by regulation of HisG enzymatic activity. In Teredinibacter turnerae (strain ATCC 39867 / T7901), this protein is ATP phosphoribosyltransferase.